Consider the following 182-residue polypeptide: Gamma-crystallin N (182 aa).

Beta/gamma crystallin 'Greek key' domains are found at residues Gly6 to Ser46, Gly47 to Gly89, and Phe95 to Gly136. The segment at Leu153 to Leu182 is disordered. A compositionally biased stretch (polar residues) spans Lys169 to Leu182.

It belongs to the beta/gamma-crystallin family. Monomer. In terms of tissue distribution, not specifically expressed in eye.

This chain is Gamma-crystallin N, found in Homo sapiens (Human).